We begin with the raw amino-acid sequence, 506 residues long: FAD-linked oxidoreductase aurO (506 aa).

The 169-residue stretch at 92-260 folds into the FAD-binding PCMH-type domain; the sequence is ITAQPLAICR…AETDVRVYPM (169 aa).

The protein belongs to the oxygen-dependent FAD-linked oxidoreductase family. As to quaternary structure, might be part of an extracellular enzyme complex composed of GIP1, aurF, aurO and aurS. The cofactor is FAD.

It localises to the secreted. The protein localises to the extracellular space. It functions in the pathway pigment biosynthesis. Functionally, FAD-linked oxidoreductase; part of the gene cluster that mediates the biosynthesis of aurofusarin, a red mycelium pigment which is acting as a mycotoxin. The first step is performed by the polyketide synthase which condenses one acetyl-CoA and 6 malonyl-CoA units to form the first intermediate, the cyclic heptaketide and yellow pigment YWA1. The C2 hydroxyl group in the pyrone ring of YWA1 is probably formed during ring closure by an aldol-type cyclization reaction. The dehydratase aurZ then acts as the first tailoring enzyme in the aurofusarin biosynthetic pathway by converting YWA1 to nor-rubrofusarin. Nor-rubrofusarin is then methylated to rubrofusarin by the O-methyltransferase aurJ. Rubrofusarin is then transported across the plasma membrane by the rubrofusarin-specific pump aurT for further enzymatic processing by the extracellular complex composed of GIP1, aurF, aurO and aurS to yield aurofusarin. In Gibberella zeae (strain ATCC MYA-4620 / CBS 123657 / FGSC 9075 / NRRL 31084 / PH-1) (Wheat head blight fungus), this protein is FAD-linked oxidoreductase aurO.